The sequence spans 366 residues: Histidinol-phosphate aminotransferase 1 (366 aa).

K226 carries the N6-(pyridoxal phosphate)lysine modification.

The protein belongs to the class-II pyridoxal-phosphate-dependent aminotransferase family. Histidinol-phosphate aminotransferase subfamily. Homodimer. It depends on pyridoxal 5'-phosphate as a cofactor.

It catalyses the reaction L-histidinol phosphate + 2-oxoglutarate = 3-(imidazol-4-yl)-2-oxopropyl phosphate + L-glutamate. It participates in amino-acid biosynthesis; L-histidine biosynthesis; L-histidine from 5-phospho-alpha-D-ribose 1-diphosphate: step 7/9. The polypeptide is Histidinol-phosphate aminotransferase 1 (Mannheimia succiniciproducens (strain KCTC 0769BP / MBEL55E)).